Consider the following 1302-residue polypeptide: Neuroglian (1302 aa).

The first 23 residues, 1–23, serve as a signal peptide directing secretion; the sequence is MWRQSTILAALLVALLCAGSAES. Over 24 to 1138 the chain is Extracellular; that stretch reads KGNRPPRITK…ANAGWFIGMM (1115 aa). Ig-like C2-type domains are found at residues 29-133, 134-225, 245-330, 339-426, 432-524, and 521-610; these read PRIT…AELN, AFKD…YKIG, PPVR…QSFS, PYFT…VYLN, PTIS…TRIT, and TRIT…ANLI. 4 disulfide bridges follow: Cys59-Cys111, Cys155-Cys212, Cys268-Cys317, and Cys360-Cys410. 2 N-linked (GlcNAc...) asparagine glycosylation sites follow: Asn182 and Asn198. N-linked (GlcNAc...) asparagine glycans are attached at residues Asn411 and Asn448. 5 consecutive Fibronectin type-III domains span residues 614–711, 716–813, 818–915, 916–1017, and 1021–1119; these read VPNA…TQPD, NPDN…SGED, APTN…TPEG, VPSP…LKDA, and APAT…TVEG. Cys625 and Cys706 are oxidised to a cystine. Asn652 and Asn683 each carry an N-linked (GlcNAc...) asparagine glycan. Residue Asn821 is glycosylated (N-linked (GlcNAc...) asparagine). Residue Asn1125 is glycosylated (N-linked (GlcNAc...) asparagine). The helical transmembrane segment at 1139-1154 threads the bilayer; that stretch reads LALAFIIILFIIICII. The Cytoplasmic portion of the chain corresponds to 1155–1302; it reads RRNRGGKYDV…AAAGAVATYV (148 aa). Positions 1172–1182 are enriched in basic and acidic residues; the sequence is GRRDYPEEGGF. 2 disordered regions span residues 1172–1223 and 1236–1291; these read GRRD…GDTG and VPGK…ASNG. Residues 1188-1203 are compositionally biased toward polar residues; the sequence is PLDNKSAGRQSVSSAN. The span at 1253–1275 shows a compositional bias: low complexity; that stretch reads AAAHQAAPTAGGSGAAGSAAAAG.

In terms of assembly, forms a complex with Nrx-IV/Nrx and Cont. Forms a complex composed of septate junction proteins Nrx-IV/Nrx, Tsf2/MTf, Cont and Nrg during late embryogenesis. As to expression, restricted to the surface of neurons and glia in the developing nervous system. Restricted to non-neuronal tissues.

It is found in the cell membrane. The protein localises to the cell junction. Its subcellular location is the septate junction. In terms of biological role, essential for septate junctions. Septate junctions, which are the equivalent of vertebrate tight junctions, are characterized by regular arrays of transverse structures that span the intermembrane space and form a physical barrier to diffusion. Required for formation of the hemolymph-brain barrier (the insect blood-brain barrier). Vital for embryonic development. Involved in the targeting for degradation or recycling of certain septate junction components, including kune and bou/boudin, by regulating their endocytosis. Functionally, may play a role in neural and glial cell adhesion in the developing embryo. May be a more general cell adhesion molecule involved in non-neuronal tissues and imaginal disk morphogenesis. This Drosophila melanogaster (Fruit fly) protein is Neuroglian (Nrg).